A 538-amino-acid chain; its full sequence is Eukaryotic translation initiation factor 3 subunit L (538 aa).

The region spanning 305 to 513 is the PCI domain; sequence TFSDILLYIQ…IHIADTKVSH (209 aa).

This sequence belongs to the eIF-3 subunit L family. Component of the eukaryotic translation initiation factor 3 (eIF-3) complex. The eIF-3 complex interacts with pix.

Its subcellular location is the cytoplasm. Its function is as follows. Component of the eukaryotic translation initiation factor 3 (eIF-3) complex, which is involved in protein synthesis of a specialized repertoire of mRNAs and, together with other initiation factors, stimulates binding of mRNA and methionyl-tRNAi to the 40S ribosome. The eIF-3 complex specifically targets and initiates translation of a subset of mRNAs involved in cell proliferation. This is Eukaryotic translation initiation factor 3 subunit L from Drosophila virilis (Fruit fly).